Here is a 391-residue protein sequence, read N- to C-terminus: 3-ketoacyl-CoA thiolase (391 aa).

Cys-95 acts as the Acyl-thioester intermediate in catalysis. Catalysis depends on proton acceptor residues His-347 and Cys-377.

This sequence belongs to the thiolase-like superfamily. Thiolase family. In terms of assembly, heterotetramer of two alpha chains (FadB) and two beta chains (FadA).

It localises to the cytoplasm. The enzyme catalyses an acyl-CoA + acetyl-CoA = a 3-oxoacyl-CoA + CoA. It participates in lipid metabolism; fatty acid beta-oxidation. Its function is as follows. Catalyzes the final step of fatty acid oxidation in which acetyl-CoA is released and the CoA ester of a fatty acid two carbons shorter is formed. This chain is 3-ketoacyl-CoA thiolase, found in Alcanivorax borkumensis (strain ATCC 700651 / DSM 11573 / NCIMB 13689 / SK2).